A 91-amino-acid polypeptide reads, in one-letter code: Protein RacC (91 aa).

This chain is Protein RacC (racC), found in Escherichia coli (strain K12).